A 405-amino-acid chain; its full sequence is L-carnitine CoA-transferase (405 aa).

Positions 97 and 104 each coordinate CoA. Aspartate 169 acts as the Nucleophile in catalysis.

The protein belongs to the CoA-transferase III family. CaiB subfamily. Homodimer.

The protein localises to the cytoplasm. It carries out the reaction crotonobetainyl-CoA + (R)-carnitine = crotonobetaine + (R)-carnitinyl-CoA. The catalysed reaction is 4-(trimethylamino)butanoyl-CoA + (R)-carnitine = (R)-carnitinyl-CoA + 4-(trimethylamino)butanoate. Its pathway is amine and polyamine metabolism; carnitine metabolism. Functionally, catalyzes the reversible transfer of the CoA moiety from gamma-butyrobetainyl-CoA to L-carnitine to generate L-carnitinyl-CoA and gamma-butyrobetaine. Is also able to catalyze the reversible transfer of the CoA moiety from gamma-butyrobetainyl-CoA or L-carnitinyl-CoA to crotonobetaine to generate crotonobetainyl-CoA. The polypeptide is L-carnitine CoA-transferase (Escherichia coli O139:H28 (strain E24377A / ETEC)).